The following is an 852-amino-acid chain: Cell surface glycoprotein (852 aa).

The signal sequence occupies residues methionine 1 to alanine 34. Asparagine 36 is a glycosylation site (N-linked (GalNAc...) (glycosaminoglycan) asparagine). The segment at lysine 84–alanine 131 is disordered. Positions aspartate 115 to proline 126 are enriched in polar residues. Residues asparagine 339, asparagine 398, asparagine 438, asparagine 513, asparagine 643, asparagine 727, asparagine 751, and asparagine 787 are each glycosylated (N-linked (Glc...) asparagine). A disordered region spans residues glutamate 772–serine 828. A compositionally biased stretch (low complexity) spans glutamate 785–glycine 823. 14 O-linked (Gal...) threonine glycosylation sites follow: threonine 789, threonine 791, threonine 792, threonine 793, threonine 795, threonine 797, threonine 798, threonine 799, threonine 801, threonine 802, threonine 803, threonine 806, threonine 807, and threonine 808. N-linked (Glc...) asparagine glycosylation occurs at asparagine 811. 2 O-linked (Gal...) threonine glycosylation sites follow: threonine 812 and threonine 813. A glycan (N-linked (Glc...) asparagine) is linked at asparagine 815. The helical transmembrane segment at isoleucine 829–leucine 849 threads the bilayer. The short motif at proline 830–phenylalanine 832 is the PGF sorting signal element.

It belongs to the halobacterial S-layer protein family. N-linked glycan at Asn-36 consists of a glycosaminoglycan chain, constructed by a repeating sulfated pentasaccharide block composed of GlcNAc, GalNAc, Gal, GalA, 3-O-methyl-GalA, and sulfate in the molar ratio of 1:1:1:1:1:2; the other N-linked glycans contain Glc, GlcA and IdoA. In terms of processing, O-linked glycans consist of Glc-Gal disaccharides. Post-translationally, the C-terminus (residues 770-778) is lipidated with diphytanylglyceryl phosphate. Cleaved by the archaeosortase ArtA at the C-terminus, with removal of a short hydrophobic segment.

It localises to the secreted. It is found in the cell wall. The protein resides in the S-layer. The protein localises to the cell membrane. Functionally, S-layer protein. The S-layer is a paracrystalline mono-layered assembly of proteins which coat the surface of the cell. This Halobacterium salinarum (strain ATCC 29341 / DSM 671 / R1) protein is Cell surface glycoprotein (csg).